The following is a 179-amino-acid chain: Large ribosomal subunit protein uL5 (179 aa).

It belongs to the universal ribosomal protein uL5 family. In terms of assembly, part of the 50S ribosomal subunit; part of the 5S rRNA/L5/L18/L25 subcomplex. Contacts the 5S rRNA and the P site tRNA. Forms a bridge to the 30S subunit in the 70S ribosome.

This is one of the proteins that bind and probably mediate the attachment of the 5S RNA into the large ribosomal subunit, where it forms part of the central protuberance. In the 70S ribosome it contacts protein S13 of the 30S subunit (bridge B1b), connecting the 2 subunits; this bridge is implicated in subunit movement. Contacts the P site tRNA; the 5S rRNA and some of its associated proteins might help stabilize positioning of ribosome-bound tRNAs. The protein is Large ribosomal subunit protein uL5 of Halalkalibacterium halodurans (strain ATCC BAA-125 / DSM 18197 / FERM 7344 / JCM 9153 / C-125) (Bacillus halodurans).